We begin with the raw amino-acid sequence, 507 residues long: ATP synthase subunit alpha, chloroplastic (507 aa).

Residue 170 to 177 participates in ATP binding; sequence GDRQTGKT.

Belongs to the ATPase alpha/beta chains family. In terms of assembly, F-type ATPases have 2 components, CF(1) - the catalytic core - and CF(0) - the membrane proton channel. CF(1) has five subunits: alpha(3), beta(3), gamma(1), delta(1), epsilon(1). CF(0) has four main subunits: a, b, b' and c.

It localises to the plastid. The protein resides in the chloroplast thylakoid membrane. It carries out the reaction ATP + H2O + 4 H(+)(in) = ADP + phosphate + 5 H(+)(out). Produces ATP from ADP in the presence of a proton gradient across the membrane. The alpha chain is a regulatory subunit. The sequence is that of ATP synthase subunit alpha, chloroplastic from Nandina domestica (Heavenly bamboo).